The following is a 118-amino-acid chain: Large ribosomal subunit protein uL22 (118 aa).

It belongs to the universal ribosomal protein uL22 family. In terms of assembly, part of the 50S ribosomal subunit.

This protein binds specifically to 23S rRNA; its binding is stimulated by other ribosomal proteins, e.g. L4, L17, and L20. It is important during the early stages of 50S assembly. It makes multiple contacts with different domains of the 23S rRNA in the assembled 50S subunit and ribosome. Its function is as follows. The globular domain of the protein is located near the polypeptide exit tunnel on the outside of the subunit, while an extended beta-hairpin is found that lines the wall of the exit tunnel in the center of the 70S ribosome. This is Large ribosomal subunit protein uL22 from Thermomicrobium roseum (strain ATCC 27502 / DSM 5159 / P-2).